The chain runs to 67 residues: Large ribosomal subunit protein uL30 (67 aa).

This sequence belongs to the universal ribosomal protein uL30 family. Part of the 50S ribosomal subunit.

The chain is Large ribosomal subunit protein uL30 from Thermotoga maritima (strain ATCC 43589 / DSM 3109 / JCM 10099 / NBRC 100826 / MSB8).